A 122-amino-acid chain; its full sequence is Large ribosomal subunit protein uL14 (122 aa).

This sequence belongs to the universal ribosomal protein uL14 family. Part of the 50S ribosomal subunit. Forms a cluster with proteins L3 and L19. In the 70S ribosome, L14 and L19 interact and together make contacts with the 16S rRNA in bridges B5 and B8.

In terms of biological role, binds to 23S rRNA. Forms part of two intersubunit bridges in the 70S ribosome. In Streptococcus pneumoniae (strain JJA), this protein is Large ribosomal subunit protein uL14.